A 126-amino-acid polypeptide reads, in one-letter code: uncharacterized protein (126 aa).

The interval 1 to 46 (MREEEAAAVVTVPQAGRDGEQPGPPAGLGCAAVRGEPGGGGPQESR) is disordered.

The protein localises to the cytoplasm. It is found in the cytoskeleton. Its subcellular location is the cilium basal body. This is an uncharacterized protein from Bos taurus (Bovine).